A 56-amino-acid polypeptide reads, in one-letter code: Potassium channel toxin alpha-KTx 9.2 (56 aa).

Residues 1–28 form the signal peptide; it reads MSRLFTLVLIVLAMNVMMAIISDPVVEA. 3 cysteine pairs are disulfide-bonded: Cys-31-Cys-47, Cys-34-Cys-52, and Cys-38-Cys-54.

Expressed by the venom gland.

It localises to the secreted. Blocks small conductance calcium-activated potassium channels (KCNN, SK). Low toxicity by intracerebroventricular injection into mice. This Olivierus martensii (Manchurian scorpion) protein is Potassium channel toxin alpha-KTx 9.2.